The primary structure comprises 246 residues: Ribulose-phosphate 3-epimerase (246 aa).

S9 is a substrate binding site. Positions 34, 36, and 83 each coordinate a divalent metal cation. D36 acts as the Proton acceptor in catalysis. Substrate is bound by residues H83, 159–162 (GFGG), 188–190 (DGG), and 210–212 (GTS). Residue D188 participates in a divalent metal cation binding. The active-site Proton donor is D188.

Belongs to the ribulose-phosphate 3-epimerase family. It depends on Co(2+) as a cofactor. Fe(2+) is required as a cofactor. The cofactor is Mn(2+). Zn(2+) serves as cofactor.

The catalysed reaction is D-ribulose 5-phosphate = D-xylulose 5-phosphate. The protein operates within carbohydrate degradation; pentose phosphate pathway; D-xylulose 5-phosphate from D-ribulose 5-phosphate (non-oxidative stage): step 1/1. Its function is as follows. Catalyzes the reversible epimerization of D-ribulose 5-phosphate to D-xylulose 5-phosphate. This is Ribulose-phosphate 3-epimerase (RPE1) from Candida glabrata (strain ATCC 2001 / BCRC 20586 / JCM 3761 / NBRC 0622 / NRRL Y-65 / CBS 138) (Yeast).